The following is a 268-amino-acid chain: Tryptophan synthase alpha chain (268 aa).

Catalysis depends on proton acceptor residues Glu49 and Asp60.

It belongs to the TrpA family. In terms of assembly, tetramer of two alpha and two beta chains.

It catalyses the reaction (1S,2R)-1-C-(indol-3-yl)glycerol 3-phosphate + L-serine = D-glyceraldehyde 3-phosphate + L-tryptophan + H2O. The protein operates within amino-acid biosynthesis; L-tryptophan biosynthesis; L-tryptophan from chorismate: step 5/5. Its function is as follows. The alpha subunit is responsible for the aldol cleavage of indoleglycerol phosphate to indole and glyceraldehyde 3-phosphate. The chain is Tryptophan synthase alpha chain from Haemophilus influenzae (strain PittGG).